The sequence spans 105 residues: UPF0145 protein CCNA_02462 (105 aa).

It belongs to the UPF0145 family.

In Caulobacter vibrioides (strain NA1000 / CB15N) (Caulobacter crescentus), this protein is UPF0145 protein CCNA_02462.